Reading from the N-terminus, the 226-residue chain is Translation initiation factor 6 (226 aa).

Belongs to the eIF-6 family.

Binds to the 50S ribosomal subunit and prevents its association with the 30S ribosomal subunit to form the 70S initiation complex. The chain is Translation initiation factor 6 from Haloquadratum walsbyi (strain DSM 16790 / HBSQ001).